Here is a 403-residue protein sequence, read N- to C-terminus: ATP phosphoribosyltransferase regulatory subunit (403 aa).

It belongs to the class-II aminoacyl-tRNA synthetase family. HisZ subfamily. Heteromultimer composed of HisG and HisZ subunits.

It is found in the cytoplasm. Its pathway is amino-acid biosynthesis; L-histidine biosynthesis; L-histidine from 5-phospho-alpha-D-ribose 1-diphosphate: step 1/9. Its function is as follows. Required for the first step of histidine biosynthesis. May allow the feedback regulation of ATP phosphoribosyltransferase activity by histidine. The polypeptide is ATP phosphoribosyltransferase regulatory subunit (Crocosphaera subtropica (strain ATCC 51142 / BH68) (Cyanothece sp. (strain ATCC 51142))).